The sequence spans 286 residues: Putative 2-aminoethylphosphonate transport system permease protein PhnU (286 aa).

6 helical membrane passes run tryptophan 19–valine 39, phenylalanine 76–isoleucine 96, phenylalanine 111–glycine 131, phenylalanine 150–methionine 170, valine 202–threonine 222, and tyrosine 254–leucine 274. The 208-residue stretch at leucine 68–tyrosine 275 folds into the ABC transmembrane type-1 domain.

This sequence belongs to the binding-protein-dependent transport system permease family.

It localises to the cell inner membrane. In terms of biological role, probably part of the PhnSTUV complex (TC 3.A.1.11.5) involved in 2-aminoethylphosphonate import. Probably responsible for the translocation of the substrate across the membrane. The protein is Putative 2-aminoethylphosphonate transport system permease protein PhnU (phnU) of Salmonella choleraesuis (strain SC-B67).